A 181-amino-acid chain; its full sequence is Large ribosomal subunit protein uL5 (181 aa).

It belongs to the universal ribosomal protein uL5 family. As to quaternary structure, part of the 50S ribosomal subunit; part of the 5S rRNA/L5/L18/L25 subcomplex. Contacts the 5S rRNA and the P site tRNA. Forms a bridge to the 30S subunit in the 70S ribosome.

Functionally, this is one of the proteins that bind and probably mediate the attachment of the 5S RNA into the large ribosomal subunit, where it forms part of the central protuberance. In the 70S ribosome it contacts protein S13 of the 30S subunit (bridge B1b), connecting the 2 subunits; this bridge is implicated in subunit movement. Contacts the P site tRNA; the 5S rRNA and some of its associated proteins might help stabilize positioning of ribosome-bound tRNAs. In Trichodesmium erythraeum (strain IMS101), this protein is Large ribosomal subunit protein uL5.